An 84-amino-acid polypeptide reads, in one-letter code: MAHKKAGGSTRNGRDSESKRLGVKIFGHQIAKAGSIIIRQRGTKFHPGTNVGCGKDHTLFALTKGKVHFQTKKGNRKFISIITE.

Residues 1 to 21 (MAHKKAGGSTRNGRDSESKRL) form a disordered region.

It belongs to the bacterial ribosomal protein bL27 family.

The polypeptide is Large ribosomal subunit protein bL27 (Baumannia cicadellinicola subsp. Homalodisca coagulata).